Here is a 488-residue protein sequence, read N- to C-terminus: MGTPVEVSKLHFLLFPFMAHGHMIPTLDMAKLFATKGAKSTILTTPLNAKLFFEKPIKSFNQDNPGLEDITIQILNFPCTELGLPDGCENTDFIFSTPDLNVGDLSQKFLLAMKYFEEPLEELLVTMRPDCLVGNMFFPWSTKVAEKFGVPRLVFHGTGYFSLCASHCIRLPKNVATSSEPFVIPDLPGDILITEEQVMETEEESVMGRFMKAIRDSERDSFGVLVNSFYELEQAYSDYFKSFVAKRAWHIGPLSLGNRKFEEKAERGKKASIDEHECLKWLDSKKCDSVIYMAFGTMSSFKNEQLIEIAAGLDMSGHDFVWVVNRKGSQVEKEDWLPEGFEEKTKGKGLIIRGWAPQVLILEHKAIGGFLTHCGWNSLLEGVAAGLPMVTWPVGAEQFYNEKLVTQVLKTGVSVGVKKMMQVVGDFISREKVEGAVREVMVGEERRKRAKELAEMAKNAVKEGGSSDLEVDRLMEELTLVKLQKEKV.

Residues Thr-297, 356–358, 373–381, and 395–398 contribute to the UDP-alpha-D-glucose site; these read APQ, HCGWNSLLE, and GAEQ.

The protein belongs to the UDP-glycosyltransferase family.

Functionally, possesses low quercetin 3-O-glucosyltransferase and 7-O-glucosyltransferase activities in vitro. The protein is UDP-glycosyltransferase 73B1 (UGT73B1) of Arabidopsis thaliana (Mouse-ear cress).